The sequence spans 602 residues: Arginine--tRNA ligase (602 aa).

Positions 132-142 match the 'HIGH' region motif; it reads ANPTGPLHVGH.

The protein belongs to the class-I aminoacyl-tRNA synthetase family. Monomer.

The protein localises to the cytoplasm. It carries out the reaction tRNA(Arg) + L-arginine + ATP = L-arginyl-tRNA(Arg) + AMP + diphosphate. The polypeptide is Arginine--tRNA ligase (Cupriavidus metallidurans (strain ATCC 43123 / DSM 2839 / NBRC 102507 / CH34) (Ralstonia metallidurans)).